Here is a 319-residue protein sequence, read N- to C-terminus: BTB/POZ domain-containing adapter for CUL3-mediated RhoA degradation protein 2 (319 aa).

Residues 31–99 (KYIRLNVGGC…LRDDTIALPK (69 aa)) form the BTB domain.

This sequence belongs to the BACURD family. Component of the BCR(TNFAIP1) E3 ubiquitin ligase complex, at least composed of cul3, tnfaip1/bacurd2 and rbx1.

The protein localises to the cytoplasm. It localises to the nucleus. The protein resides in the endosome. The protein operates within protein modification; protein ubiquitination. Its function is as follows. Substrate-specific adapter of a BCR (BTB-CUL3-RBX1) E3 ubiquitin-protein ligase complex involved in regulation of cytoskeleton structure. The BCR(TNFAIP1) E3 ubiquitin ligase complex mediates the ubiquitination of target proteins, leading to their degradation by the proteasome. The protein is BTB/POZ domain-containing adapter for CUL3-mediated RhoA degradation protein 2 (tnfaip1) of Xenopus laevis (African clawed frog).